The sequence spans 197 residues: NADH-quinone oxidoreductase subunit C (197 aa).

This sequence belongs to the complex I 30 kDa subunit family. As to quaternary structure, NDH-1 is composed of 14 different subunits. Subunits NuoB, C, D, E, F, and G constitute the peripheral sector of the complex.

It localises to the cell inner membrane. The catalysed reaction is a quinone + NADH + 5 H(+)(in) = a quinol + NAD(+) + 4 H(+)(out). In terms of biological role, NDH-1 shuttles electrons from NADH, via FMN and iron-sulfur (Fe-S) centers, to quinones in the respiratory chain. The immediate electron acceptor for the enzyme in this species is believed to be ubiquinone. Couples the redox reaction to proton translocation (for every two electrons transferred, four hydrogen ions are translocated across the cytoplasmic membrane), and thus conserves the redox energy in a proton gradient. The sequence is that of NADH-quinone oxidoreductase subunit C from Neisseria meningitidis serogroup A / serotype 4A (strain DSM 15465 / Z2491).